We begin with the raw amino-acid sequence, 176 residues long: MMRALLLAIGLGLVAALQAQEFPAVGQPLQDLLGRWYLKAMTSDPEIPGKKPESVTPLILKALEGGDLEAQITFLIDGQCQDVTLVLKKTNQPFTFTAYDGKRVVYILPSKVKDHYILYCEGELDGQEVRMAKLVGRDPENNPEALEEFKEVARAKGLNPDIVRPQQSETCSPGGN.

The signal sequence occupies residues M1–A19. A disulfide bond links C80 and C171.

It belongs to the calycin superfamily. Lipocalin family. As to quaternary structure, predominantly monomer. May form homodimer. Interacts with LMBR1L; this interaction mediates the endocytosis of LCN1.

Its subcellular location is the secreted. In terms of biological role, could play a role in taste reception. Could be necessary for the concentration and delivery of sapid molecules in the gustatory system. Can bind various ligands, with chemical structures ranging from lipids and retinoids to the macrocyclic antibiotic rifampicin and even to microbial siderophores. Exhibits an extremely wide ligand pocket. This chain is Lipocalin-1 (LCN1), found in Sus scrofa (Pig).